Consider the following 357-residue polypeptide: uncharacterized protein (357 aa).

A DNA-binding region (zn(2)-C6 fungal-type) is located at residues cysteine 6–cysteine 32.

The protein localises to the nucleus. This is an uncharacterized protein from Schizosaccharomyces pombe (strain 972 / ATCC 24843) (Fission yeast).